A 318-amino-acid polypeptide reads, in one-letter code: UDP-N-acetylenolpyruvoylglucosamine reductase (318 aa).

In terms of domain architecture, FAD-binding PCMH-type spans 38–204; it reads IGGVCPVIVE…LGIEILLKEG (167 aa). Residue Arg182 is part of the active site. Over residues 212 to 229 the composition is skewed to basic and acidic residues; the sequence is SLKDKRDRRNSSQPENKK. Residues 212 to 232 are disordered; it reads SLKDKRDRRNSSQPENKKSAG. Ser233 (proton donor) is an active-site residue. The active site involves Glu310.

It belongs to the MurB family. It depends on FAD as a cofactor.

It is found in the cytoplasm. It carries out the reaction UDP-N-acetyl-alpha-D-muramate + NADP(+) = UDP-N-acetyl-3-O-(1-carboxyvinyl)-alpha-D-glucosamine + NADPH + H(+). It functions in the pathway cell wall biogenesis; peptidoglycan biosynthesis. In terms of biological role, cell wall formation. In Leptospira interrogans serogroup Icterohaemorrhagiae serovar copenhageni (strain Fiocruz L1-130), this protein is UDP-N-acetylenolpyruvoylglucosamine reductase.